We begin with the raw amino-acid sequence, 365 residues long: 3-dehydroquinate synthase (365 aa).

NAD(+) contacts are provided by residues 107-111 (GVIGD), 131-132 (TS), Lys144, and Lys153. Residues Glu186, His251, and His268 each coordinate Zn(2+).

The protein belongs to the sugar phosphate cyclases superfamily. Dehydroquinate synthase family. The cofactor is Co(2+). It depends on Zn(2+) as a cofactor. NAD(+) serves as cofactor.

It is found in the cytoplasm. It catalyses the reaction 7-phospho-2-dehydro-3-deoxy-D-arabino-heptonate = 3-dehydroquinate + phosphate. It functions in the pathway metabolic intermediate biosynthesis; chorismate biosynthesis; chorismate from D-erythrose 4-phosphate and phosphoenolpyruvate: step 2/7. In terms of biological role, catalyzes the conversion of 3-deoxy-D-arabino-heptulosonate 7-phosphate (DAHP) to dehydroquinate (DHQ). This Crocosphaera subtropica (strain ATCC 51142 / BH68) (Cyanothece sp. (strain ATCC 51142)) protein is 3-dehydroquinate synthase.